The following is a 1565-amino-acid chain: MKVKKTYGFRKSKISKTLCGAVLGTVAAVSVAGQKVFADETTTTSDVDTKVVGTQTGNPATNLPEAQGSASKEAEQSQTKLERQMVHTIEVPKTDLDQAAKDAKSAGVNVVQDADVNKGTVKTPEEAVQKETEIKEDYTKQAEDIKKTTDQYKSDVAAHEAEVAKIKAKNQATKEQYEKDMAAHKAEVERINAANAASKTAYEAKLAQYQADLAAVQKTNAANQAAYQKALAAYQAELKRVQEANAAAKAAYDTAVAANNAKNTEIAAANEEIRKRNATAKAEYETKLAQYQAELKRVQEANAANEADYQAKLTAYQTELARVQKANADAKATYEAAVAANNAKNAALTAENTAIKQRNENAKATYEAALKQYEADLAAVKKANAANEADYQAKLTAYQTELARVQKANADAKAAYEAAVAANNAANAALTAENTAIKKRNADAKADYEAKLAKYQADLAKYQKDLADYPVKLKAYEDEQTSIKAALAELEKHKNEDGNLTEPSAQNLVYDLEPNANLSLTTDGKFLKASAVDDAFSKSTSKAKYDQKILQLDDLDITNLEQSNDVASSMELYGNFGDKAGWSTTVSNNSQVKWGSVLLERGQSATATYTNLQNSYYNGKKISKIVYKYTVDPKSKFQGQKVWLGIFTDPTLGVFASAYTGQVEKNTSIFIKNEFTFYHEDEKPINFDNALLSVTSLNREHNSIEMAKDYSGKFVKISGSSIGEKNGMIYATDTLNFKQGEGGSRWTMYKNSQAGSGWDSSDAPNSWYGAGAIKMSGPNNHVTVGATSATNVMPVSDMPVVPGKDNTDGKKPNIWYSLNGKIRAVNVPKVTKEKPTPPVKPTAPTKPTYETEKPLKPAPVAPNYEKEPTPPTRTPDQAEPNKPTPPTYETEKPLEPAPVEPSYEAEPTPPTRTPDQAEPNKPTPPTYETEKPLEPAPVEPSYEAEPTPPTPTPDQPEPNKPVEPTYEVIPTPPTDPVYQDLPTPPSDPTVHFHYFKLAVQPQVNKEIRNNNDINIDRTLVAKQSVVKFQLKTADLPAGRDETTSFVLVDPLPSGYQFNPEATKAASPGFDVTYDNATNTVTFKATAATLATFNADLTKSVATIYPTVVGQVLNDGATYKNNFTLTVNDAYGIKSNVVRVTTPGKPNDPDNPNNNYIKPTKVNKNENGVVIDGKTVLAGSTNYYELTWDLDQYKNDRSSADTIQKGFYYVDDYPEEALELRQDLVKITDANGNEVTGVSVDNYTNLEAAPQEIRDVLSKAGIRPKGAFQIFRADNPREFYDTYVKTGIDLKIVSPMVVKKQMGQTGGSYENQAYQIDFGNGYASNIVINNVPKINPKKDVTLTLDPADTNNVDGQTIPLNTVFNYRLIGGIIPANHSEELFEYNFYDDYDQTGDHYTGQYKVFAKVDITLKNGVIIKSGTELTQYTTAEVDTTKGAITIKFKEAFLRSVSIDSAFQAESYIQMKRIAVGTFENTYINTVNGVTYSSNTVKTTTPEDPADPTDPQDPSSPRTSTVIIYKPQSTAYQPSSVQETLPNTGVTNNAYMPLLGIIGLVTSFSLLGLKAKKD.

Residues 1 to 38 (MKVKKTYGFRKSKISKTLCGAVLGTVAAVSVAGQKVFA) form the signal peptide. Low complexity predominate over residues 42 to 54 (TTTSDVDTKVVGT). Positions 42–81 (TTTSDVDTKVVGTQTGNPATNLPEAQGSASKEAEQSQTKL) are disordered. Residues 72-81 (KEAEQSQTKL) are compositionally biased toward basic and acidic residues. 4 Ag I/II A repeats span residues 146–220 (KKTT…QKTN), 221–302 (AANQ…QEAN), 303–384 (AANE…KKAN), and 385–466 (AANE…QKDL). The tract at residues 203–448 (EAKLAQYQAD…KRNADAKADY (246 aa)) is heptad repeats of Y-[EQ]-X-X-L-A-X. A V-region (lectin-like) region spans residues 461-834 (KYQKDLADYP…VNVPKVTKEK (374 aa)). 2 disordered regions span residues 827-985 (VPKV…PTPP) and 1486-1511 (NTVKTTTPEDPADPTDPQDPSSPRTS). Residues 848 to 887 (TYETEKPLKPAPVAPNYEKEPTPPTRTPDQAEPNKPTPPT) form a P1 repeat. Residues 888-926 (YETEKPLEPAPVEPSYEAEPTPPTRTPDQAEPNKPTPPT) form a P2 repeat. Residues 927–964 (YETEKPLEPAPVEPSYEAEPTPPTPTPDQPEPNKPVEP) form a P3 repeat. The span at 946-961 (PTPPTPTPDQPEPNKP) shows a compositional bias: pro residues. Residues 1532–1536 (LPNTG) carry the LPXTG sorting signal motif. Position 1535 is a pentaglycyl murein peptidoglycan amidated threonine (threonine 1535). A propeptide spans 1536–1565 (GVTNNAYMPLLGIIGLVTSFSLLGLKAKKD) (removed by sortase).

Belongs to the antigen I/II family.

It is found in the secreted. The protein resides in the cell wall. In terms of biological role, surface protein antigen implicated in dental caries. This chain is Major cell-surface adhesin PAc, found in Streptococcus mutans.